The sequence spans 509 residues: Poly(A) RNA polymerase GLD2-B (509 aa).

The disordered stretch occupies residues 88–125 (PGSPPSSFQNRKRRSDEGNSPYDVKRQRFQSPQEQTVN). Residues 116–125 (FQSPQEQTVN) are compositionally biased toward polar residues. Mg(2+)-binding residues include D240 and D242. In terms of domain architecture, PAP-associated spans 409 to 462 (LGDLLLGFLKYFAVEFDWSKDIISLREAKALPRTDDYEWRNKYICVEEPFDGSN).

It belongs to the DNA polymerase type-B-like family. GLD2 subfamily. Component of a complex at least composed of cpeb1, cpsf1, tent2/gld2, pabpc1/ePAB, parn and sympk. Following oocyte maturation, parn is expelled from the complex. Interacts with rbfox2. Interacts with sympk. Mg(2+) serves as cofactor. Requires Mn(2+) as cofactor.

The protein localises to the cytoplasm. The enzyme catalyses RNA(n) + ATP = RNA(n)-3'-adenine ribonucleotide + diphosphate. Functionally, cytoplasmic poly(A) RNA polymerase that adds successive AMP monomers to the 3'-end of specific RNAs, forming a poly(A) tail. In contrast to the canonical nuclear poly(A) RNA polymerase, it only adds poly(A) to selected cytoplasmic mRNAs during oocyte maturation. Plays a central role during oocyte maturation by mediating polyadenylation of dormant mRNAs, which contain 5'AAUAAA-3' sequence in their 3'-UTR. In immature oocytes, polyadenylation of poly(A) tails is counteracted by the ribonuclease parn. During maturation parn is excluded from the ribonucleoprotein complex, allowing poly(A) elongation and activation of mRNAs. May not play a role in replication-dependent histone mRNA degradation. The chain is Poly(A) RNA polymerase GLD2-B from Xenopus laevis (African clawed frog).